The sequence spans 527 residues: Peptide chain release factor 3 (527 aa).

A tr-type G domain is found at 11–278 (AKRRTFAIIS…GFVEWAPAPL (268 aa)). GTP contacts are provided by residues 20–27 (SHPDAGKT), 87–91 (DTPGH), and 141–144 (NKMD).

Belongs to the TRAFAC class translation factor GTPase superfamily. Classic translation factor GTPase family. PrfC subfamily.

It is found in the cytoplasm. Increases the formation of ribosomal termination complexes and stimulates activities of RF-1 and RF-2. It binds guanine nucleotides and has strong preference for UGA stop codons. It may interact directly with the ribosome. The stimulation of RF-1 and RF-2 is significantly reduced by GTP and GDP, but not by GMP. The chain is Peptide chain release factor 3 from Teredinibacter turnerae (strain ATCC 39867 / T7901).